The sequence spans 319 residues: Ribonuclease Z (319 aa).

Zn(2+) contacts are provided by histidine 62, histidine 64, aspartate 66, histidine 67, histidine 145, aspartate 216, and histidine 274. Residue aspartate 66 is the Proton acceptor of the active site.

Belongs to the RNase Z family. In terms of assembly, homodimer. Zn(2+) is required as a cofactor.

The enzyme catalyses Endonucleolytic cleavage of RNA, removing extra 3' nucleotides from tRNA precursor, generating 3' termini of tRNAs. A 3'-hydroxy group is left at the tRNA terminus and a 5'-phosphoryl group is left at the trailer molecule.. Its function is as follows. Zinc phosphodiesterase, which displays some tRNA 3'-processing endonuclease activity. Probably involved in tRNA maturation, by removing a 3'-trailer from precursor tRNA. In Parasynechococcus marenigrum (strain WH8102), this protein is Ribonuclease Z.